We begin with the raw amino-acid sequence, 400 residues long: S-adenosylmethionine synthase (400 aa).

His-17 serves as a coordination point for ATP. Mg(2+) is bound at residue Asp-19. Glu-45 provides a ligand contact to K(+). L-methionine contacts are provided by Glu-58 and Gln-101. The tract at residues 101–111 (QSADIAMGVDQ) is flexible loop. Residues 177–179 (DGK), 244–245 (RF), Asp-253, 259–260 (RK), Ala-276, and Lys-280 contribute to the ATP site. Asp-253 lines the L-methionine pocket. Lys-284 contacts L-methionine.

The protein belongs to the AdoMet synthase family. As to quaternary structure, homotetramer; dimer of dimers. The cofactor is Mg(2+). K(+) is required as a cofactor.

The protein resides in the cytoplasm. It catalyses the reaction L-methionine + ATP + H2O = S-adenosyl-L-methionine + phosphate + diphosphate. It functions in the pathway amino-acid biosynthesis; S-adenosyl-L-methionine biosynthesis; S-adenosyl-L-methionine from L-methionine: step 1/1. Functionally, catalyzes the formation of S-adenosylmethionine (AdoMet) from methionine and ATP. The overall synthetic reaction is composed of two sequential steps, AdoMet formation and the subsequent tripolyphosphate hydrolysis which occurs prior to release of AdoMet from the enzyme. This Bacillus velezensis (strain DSM 23117 / BGSC 10A6 / LMG 26770 / FZB42) (Bacillus amyloliquefaciens subsp. plantarum) protein is S-adenosylmethionine synthase.